Here is a 227-residue protein sequence, read N- to C-terminus: Transmembrane emp24 domain-containing protein 1 (227 aa).

An N-terminal signal peptide occupies residues 1 to 23 (MMAAGAALALALWLLMPPVEVGG). Residues 24–194 (AGPPPIQDGE…LQEGNLERVN (171 aa)) lie on the Extracellular side of the membrane. The GOLD domain maps to 43 to 125 (KQCFYQSAPA…EKLVFFELIF (83 aa)). Residues 145–170 (EMLDVKMEDIKESIETMRTRLERSIQ) adopt a coiled-coil conformation. The helical transmembrane segment at 195-215 (FWSAVNVAVLLLVAVLQVCTL) threads the bilayer. The Cytoplasmic segment spans residues 216-227 (KRFFQDKRPVPT). The COPII vesicle coat-binding signature appears at 218–219 (FF). The short motif at 218-227 (FFQDKRPVPT) is the COPI vesicle coat-binding element.

It belongs to the EMP24/GP25L family. In terms of assembly, homodimer in endoplasmic reticulum, endoplasmic reticulum-Golgi intermediate compartment and cis-Golgi network. Interacts with IL1RL1. Interacts with RNF26; this interaction is important to modulate innate immune signaling through the cGAS-STING pathway. Widely expressed.

Its subcellular location is the cell membrane. The protein resides in the endoplasmic reticulum membrane. It is found in the golgi apparatus. It localises to the cis-Golgi network membrane. The protein localises to the endoplasmic reticulum-Golgi intermediate compartment membrane. In terms of biological role, potential role in vesicular protein trafficking, mainly in the early secretory pathway. May act as a cargo receptor at the lumenal side for incorporation of secretory cargo molecules into transport vesicles and may be involved in vesicle coat formation at the cytoplasmic side. Plays a positive role in IL-33-mediated IL-8 and IL-6 production by interacting with interleukin-33 receptor IL1RL1. Also plays a role in the modulation of innate immune signaling through the cGAS-STING pathway by interacting with RNF26. The polypeptide is Transmembrane emp24 domain-containing protein 1 (TMED1) (Homo sapiens (Human)).